Here is a 97-residue protein sequence, read N- to C-terminus: Large ribosomal subunit protein uL23 (97 aa).

The protein belongs to the universal ribosomal protein uL23 family. In terms of assembly, part of the 50S ribosomal subunit. Contacts protein L29, and trigger factor when it is bound to the ribosome.

One of the early assembly proteins it binds 23S rRNA. One of the proteins that surrounds the polypeptide exit tunnel on the outside of the ribosome. Forms the main docking site for trigger factor binding to the ribosome. This chain is Large ribosomal subunit protein uL23, found in Lactococcus lactis subsp. cremoris (strain SK11).